The chain runs to 200 residues: Putative 3-methyladenine DNA glycosylase (200 aa).

Belongs to the DNA glycosylase MPG family.

This chain is Putative 3-methyladenine DNA glycosylase, found in Rhodopseudomonas palustris (strain BisB18).